The following is a 430-amino-acid chain: Methylthioribose kinase 1 (430 aa).

ATP is bound by residues 52-56, lysine 71, and 125-127; these read DGNLN and RYI. Asparagine 56 is a substrate binding site. Aspartate 246 provides a ligand contact to substrate. Residue 263–265 participates in ATP binding; the sequence is DPE. Residue arginine 373 coordinates substrate.

This sequence belongs to the methylthioribose kinase family. Homodimer.

The catalysed reaction is 5-(methylsulfanyl)-D-ribose + ATP = 5-(methylsulfanyl)-alpha-D-ribose 1-phosphate + ADP + H(+). It functions in the pathway amino-acid biosynthesis; L-methionine biosynthesis via salvage pathway; S-methyl-5-thio-alpha-D-ribose 1-phosphate from S-methyl-5'-thioadenosine (hydrolase route): step 2/2. Its function is as follows. Catalyzes the phosphorylation of methylthioribose into methylthioribose-1-phosphate. This chain is Methylthioribose kinase 1, found in Oryza sativa subsp. japonica (Rice).